Reading from the N-terminus, the 230-residue chain is Large ribosomal subunit protein uL1 (230 aa).

Belongs to the universal ribosomal protein uL1 family. Part of the 50S ribosomal subunit.

Functionally, binds directly to 23S rRNA. The L1 stalk is quite mobile in the ribosome, and is involved in E site tRNA release. Protein L1 is also a translational repressor protein, it controls the translation of the L11 operon by binding to its mRNA. The protein is Large ribosomal subunit protein uL1 of Leptospira borgpetersenii serovar Hardjo-bovis (strain L550).